The chain runs to 916 residues: Protein translocase subunit SecA (916 aa).

ATP contacts are provided by residues Gln87, 105 to 109 (GEGKT), and Asp507. Positions 900, 902, 911, and 912 each coordinate Zn(2+).

Belongs to the SecA family. In terms of assembly, monomer and homodimer. Part of the essential Sec protein translocation apparatus which comprises SecA, SecYEG and auxiliary proteins SecDF-YajC and YidC. It depends on Zn(2+) as a cofactor.

It localises to the cell inner membrane. The protein localises to the cytoplasm. The enzyme catalyses ATP + H2O + cellular proteinSide 1 = ADP + phosphate + cellular proteinSide 2.. In terms of biological role, part of the Sec protein translocase complex. Interacts with the SecYEG preprotein conducting channel. Has a central role in coupling the hydrolysis of ATP to the transfer of proteins into and across the cell membrane, serving both as a receptor for the preprotein-SecB complex and as an ATP-driven molecular motor driving the stepwise translocation of polypeptide chains across the membrane. In Neisseria meningitidis serogroup B (strain ATCC BAA-335 / MC58), this protein is Protein translocase subunit SecA.